The sequence spans 482 residues: tRNA sulfurtransferase (482 aa).

Residues 61-165 form the THUMP domain; that stretch reads QQVLEILTTT…DDKLNQILAH (105 aa). ATP-binding positions include 183–184, lysine 265, glycine 287, and glutamine 296; that span reads LI. Cysteines 344 and 456 form a disulfide. Residues 404–482 form the Rhodanese domain; it reads IEEHAVVLDI…GFNNVKVYRP (79 aa). The Cysteine persulfide intermediate role is filled by cysteine 456.

The protein belongs to the ThiI family.

It is found in the cytoplasm. It carries out the reaction [ThiI sulfur-carrier protein]-S-sulfanyl-L-cysteine + a uridine in tRNA + 2 reduced [2Fe-2S]-[ferredoxin] + ATP + H(+) = [ThiI sulfur-carrier protein]-L-cysteine + a 4-thiouridine in tRNA + 2 oxidized [2Fe-2S]-[ferredoxin] + AMP + diphosphate. It catalyses the reaction [ThiS sulfur-carrier protein]-C-terminal Gly-Gly-AMP + S-sulfanyl-L-cysteinyl-[cysteine desulfurase] + AH2 = [ThiS sulfur-carrier protein]-C-terminal-Gly-aminoethanethioate + L-cysteinyl-[cysteine desulfurase] + A + AMP + 2 H(+). It participates in cofactor biosynthesis; thiamine diphosphate biosynthesis. In terms of biological role, catalyzes the ATP-dependent transfer of a sulfur to tRNA to produce 4-thiouridine in position 8 of tRNAs, which functions as a near-UV photosensor. Also catalyzes the transfer of sulfur to the sulfur carrier protein ThiS, forming ThiS-thiocarboxylate. This is a step in the synthesis of thiazole, in the thiamine biosynthesis pathway. The sulfur is donated as persulfide by IscS. This is tRNA sulfurtransferase from Vibrio vulnificus (strain CMCP6).